Here is a 582-residue protein sequence, read N- to C-terminus: Semenogelin-2 (582 aa).

The first 23 residues, 1 to 23 (MKSIILFVLSLLLILEKQAAVMG), serve as a signal peptide directing secretion. Disordered stretches follow at residues 25–62 (KGGS…SKGS), 91–190 (HKTT…QGGS), and 272–553 (NLNQ…FSGA). The span at 50-59 (GQKDKQHTES) shows a compositional bias: basic and acidic residues. Basic residues predominate over residues 92 to 134 (KTTKSKQHLRRHQRLLNYKQKGRGRVKPKRHFHLIVIHRKGGQ). Composition is skewed to polar residues over residues 137–161 (HGTQ…QYSN) and 174–190 (EQAS…QGGS). Positions 293–305 (TEERQPNHEEKSV) are enriched in basic and acidic residues. The segment covering 325-335 (KSQNQVTIPSQ) has biased composition (polar residues). A compositionally biased stretch (basic and acidic residues) spans 336–345 (DQEHGHKENK). The segment covering 385–395 (KSQNQVAIPSQ) has biased composition (polar residues). Residues 396–405 (DQEHGHKENK) are compositionally biased toward basic and acidic residues. Residues 445-455 (KSQNQVTIPSQ) show a composition bias toward polar residues. Over residues 456–465 (DQEHGHKENK) the composition is skewed to basic and acidic residues. Composition is skewed to polar residues over residues 487–498 (KDVSQSSLSFQT) and 506–529 (SQIQ…NSGK). Residues 530–546 (SADRKQDLLSHEQEGRY) are compositionally biased toward basic and acidic residues.

It belongs to the semenogelin family. As to quaternary structure, interacts with SERPINA5.

It is found in the secreted. In terms of biological role, participates in the formation of a gel matrix (sperm coagulum) entrapping the accessory gland secretions and ejaculated spermatozoa. The sequence is that of Semenogelin-2 (SEMG2) from Macaca fascicularis (Crab-eating macaque).